Consider the following 1023-residue polypeptide: Transmembrane protein 132A (1023 aa).

The signal sequence occupies residues 1-35 (MCARMAGRTTAAPRGPYGPWLCLLVALALDVVRVD). The Extracellular segment spans residues 36-852 (CGQAPLDPVY…VTELELGMYA (817 aa)). The disordered stretch occupies residues 212 to 246 (AAEGPGGCGSGEENDPGEQALPVGGVELRPADPPQ). Asn-280 carries an N-linked (GlcNAc...) asparagine glycan. 2 disordered regions span residues 512–533 (WRVP…DEAE) and 766–839 (LPPA…MVPA). The segment covering 515 to 527 (PGPAEGPAEPAAE) has biased composition (low complexity). Residue Ser-529 is modified to Phosphoserine; by FAM20C. The segment at 611–916 (IEVRSPLSDS…RQLDRQSPGP (306 aa)) is binds to HSPA5/GRP78. Residues 671–1023 (LPAPKQEVAL…NYMERIRGSS (353 aa)) are confers cellular localization similar to full-length form. Over residues 778–790 (SSPAWSPPATEAT) the composition is skewed to low complexity. A compositionally biased stretch (basic and acidic residues) spans 809–823 (GKFERAEEEARKEET). Over residues 824–836 (EAREEEEEEEEEM) the composition is skewed to acidic residues. The chain crosses the membrane as a helical span at residues 853–873 (LLGVFCVAIFIFLVNGVVFVL). Topologically, residues 874-1023 (RYQRKEPPDS…NYMERIRGSS (150 aa)) are cytoplasmic. A disordered region spans residues 905-961 (LSRQLDRQSPGPPKGEGSCPCESGGGGEAPTLAPGPPGGTTSSSSTLARKEAGGRRK).

It belongs to the TMEM132 family. As to quaternary structure, interacts with HSPA5/GRP78.

Its subcellular location is the golgi apparatus membrane. The protein localises to the endoplasmic reticulum membrane. Functionally, may play a role in embryonic and postnatal development of the brain. Increased resistance to cell death induced by serum starvation in cultured cells. Regulates cAMP-induced GFAP gene expression via STAT3 phosphorylation. The sequence is that of Transmembrane protein 132A (TMEM132A) from Homo sapiens (Human).